A 731-amino-acid chain; its full sequence is MAETPNSDMSGATGGRSKRPKSNQDWWPSKLNLEILDQNARDVGPVEDDFDYAEEFQKLDLEAVKSDLEELMTSSQDWWPADYGHYGPLFIRMAWHSAGTYRTADGRGGAAGGRQRFAPINSWPDNANLDKARRLLLPIKQKYGQKISWADLMILAGNVAIESMGFKTFGYAGGREDAFEEDKAVNWGPEDEFETQERFDEPGEIQEGLGASVMGLIYVNPEGPDGNPDPEASAKNIRQTFDRMAMNDKETAALIAGGHTFGKVHGADDPEENLGPEPEAAPIEQQGLGWQNKNGNSKGGEMITSGIEGPWTQSPTEWDMGYINNLLDYEWEPEKGPGGAWQWAPKSEELKNSVPDAHDPDEKQTPMMLTTDIALKRDPDYREVMETFQENPMEFGMNFAKAWYKLTHRDMGPPERFLGPEVPDEEMIWQDPLPDADYDLIGDEEIAELKEEILDSDLSVSQLVKTAWASASTYRDSDKRGGANGARLRLEPQKNWEVNEPEQLETVLGTLENIQTEFNDSRSDGTQVSLADLIVLGGNAAVEQAAANAGYDVEIPFEPGRVDAGPEHTDAPSFDALKPKVDGVRNYIQDDITRPAEEVLVDNADLLNLTASELTALIGGMRSIGANYQDTDLGVFTDEPETLTNDFFVNLLDMGTEWEPAADSEHRYKGLDRDTGEVKWEATRIDLIFGSNDRLRAISEVYGSADAEKKLVHDFVDTWSKVMKLDRFDLE.

A compositionally biased stretch (polar residues) spans 1 to 10 (MAETPNSDMS). The segment at 1 to 26 (MAETPNSDMSGATGGRSKRPKSNQDW) is disordered. A cross-link (tryptophyl-tyrosyl-methioninium (Trp-Tyr) (with M-244)) is located at residues 95 to 218 (WHSAGTYRTA…LGASVMGLIY (124 aa)). H96 serves as the catalytic Proton acceptor. The tryptophyl-tyrosyl-methioninium (Tyr-Met) (with W-95) cross-link spans 218–244 (YVNPEGPDGNPDPEASAKNIRQTFDRM). Residue H259 coordinates heme b.

As to quaternary structure, homodimer. Heme b is required as a cofactor. In terms of processing, formation of the three residue Trp-Tyr-Met cross-link is important for the catalase, but not the peroxidase activity of the enzyme.

The enzyme catalyses H2O2 + AH2 = A + 2 H2O. It carries out the reaction 2 H2O2 = O2 + 2 H2O. In terms of biological role, bifunctional enzyme with both catalase and broad-spectrum peroxidase activity. In Haloarcula marismortui (strain ATCC 43049 / DSM 3752 / JCM 8966 / VKM B-1809) (Halobacterium marismortui), this protein is Catalase-peroxidase 2.